The sequence spans 161 residues: uncharacterized protein (161 aa).

An RING-type zinc finger spans residues 72-134 (CAICLDNLQN…EAQQTCPTCR (63 aa)). The interval 140 to 161 (DKEVEEEERQRNLEELHDSMYG) is disordered.

This is an uncharacterized protein from Caenorhabditis elegans.